A 60-amino-acid chain; its full sequence is MLKLKMMLCVMMLPLVVVGCTSKQSVSQCVKPPPPPAWIMQPPPDWQTPLNGIISPSERG.

An N-terminal signal peptide occupies residues 1-19 (MLKLKMMLCVMMLPLVVVG). The N-palmitoyl cysteine; by host moiety is linked to residue cysteine 20. Residue cysteine 20 is the site of S-diacylglycerol cysteine; by host attachment. Over 20–60 (CTSKQSVSQCVKPPPPPAWIMQPPPDWQTPLNGIISPSERG) the chain is Periplasmic. The interval 32–44 (PPPPPAWIMQPPP) is proline-rich.

Belongs to the Lambdavirus o-spanin family. As to quaternary structure, homodimer; disulfide-linked. Interacts (via C-terminus) with the spanin inner membrane subunit (via C-terminus). Part of the spanin complex which spans the entire periplasmic space. The spanin complex is composed of one homodimer of the i-spanin linked by intermolecular disulfide bonds involving two Cys residues and one homodimer of the o-spanin covalently linked by an intermolecular disulfide bond involving one Cys.

It is found in the host cell outer membrane. Functionally, component of the spanin complex that disrupts the host outer membrane and participates in cell lysis during virus exit. The spanin complex conducts the final step in host lysis by disrupting the outer membrane after holin and endolysin action have permeabilized the inner membrane and degraded the host peptidoglycans. Host outer membrane disruption due to local fusion between the inner and outer membrane performed by the spanin complex. The sequence is that of Spanin, outer lipoprotein subunit (Rz1) from Escherichia phage lambda (Bacteriophage lambda).